Here is a 1290-residue protein sequence, read N- to C-terminus: Alpha-amylase (1290 aa).

The signal sequence occupies residues 1 to 31; that stretch reads MTRKTRYLHQITTLILGGLLIVPAAAPPVSA. The Nucleophile role is filled by Glu231. Asp373 serves as the catalytic Proton donor. Positions 817–902 constitute a Fibronectin type-III domain; sequence VPANLQATVM…AAATATTPAG (86 aa). The tract at residues 902–978 is CBM25; the sequence is GNHVTVYYKQ…SNGGSNYLFG (77 aa). Low complexity-rich tracts occupy residues 994-1008 and 1016-1031; these read APVA…APTA and VTPT…VAPT. Residues 994-1037 form a disordered region; that stretch reads APVAPSATPTVAPTATPTPKPSVTPTVTPITTPTVAPTLSPTPT. The CBM25 stretch occupies residues 1092–1171; sequence GNSATIYYKN…NGGSNYHFGT (80 aa). The region spanning 1183–1289 is the CBM20 domain; the sequence is TGEPQADSVT…VTLTVQRWKD (107 aa).

The protein belongs to the glycosyl hydrolase 119 (GH119) family.

The protein resides in the secreted. The enzyme catalyses Endohydrolysis of (1-&gt;4)-alpha-D-glucosidic linkages in polysaccharides containing three or more (1-&gt;4)-alpha-linked D-glucose units.. Acts on maltooligosaccharides that have a degree of polymerization (DP) of 4 or more, amylose, and soluble or raw starch to produce glucose and maltooligosaccharides up to DP5 by a hydrolysis reaction. Also acts on maltooligosyl trehaloses that have DP5 or more to produce trehalose as the major hydrolysis product. The chain is Alpha-amylase from Niallia circulans (Bacillus circulans).